The following is a 57-amino-acid chain: DNA gyrase inhibitor YacG (57 aa).

Residues cysteine 10, cysteine 13, cysteine 25, and cysteine 29 each contribute to the Zn(2+) site.

Belongs to the DNA gyrase inhibitor YacG family. In terms of assembly, interacts with GyrB. Zn(2+) serves as cofactor.

In terms of biological role, inhibits all the catalytic activities of DNA gyrase by preventing its interaction with DNA. Acts by binding directly to the C-terminal domain of GyrB, which probably disrupts DNA binding by the gyrase. This Brucella abortus (strain 2308) protein is DNA gyrase inhibitor YacG.